The sequence spans 294 residues: Flavin-dependent thymidylate synthase (294 aa).

The ThyX domain occupies 27–250 (GFIRVIDYMG…PFTYEAFEEY (224 aa)). Residues T73, 96 to 98 (RHR), and E104 each bind FAD. Residues 93–96 (QWIR), 104–108 (EYSAR), and R189 contribute to the dUMP site. Residues 96–106 (RHRTASVNEYS) carry the ThyX motif motif. Residues 205 to 207 (NLH) and H211 each bind FAD. R216 provides a ligand contact to dUMP. Catalysis depends on R216, which acts as the Involved in ionization of N3 of dUMP, leading to its activation.

The protein belongs to the thymidylate synthase ThyX family. Homotetramer. FAD serves as cofactor.

The enzyme catalyses dUMP + (6R)-5,10-methylene-5,6,7,8-tetrahydrofolate + NADPH + H(+) = dTMP + (6S)-5,6,7,8-tetrahydrofolate + NADP(+). Its pathway is pyrimidine metabolism; dTTP biosynthesis. In terms of biological role, catalyzes the reductive methylation of 2'-deoxyuridine-5'-monophosphate (dUMP) to 2'-deoxythymidine-5'-monophosphate (dTMP) while utilizing 5,10-methylenetetrahydrofolate (mTHF) as the methyl donor, and NADPH and FADH(2) as the reductant. This Rickettsia typhi (strain ATCC VR-144 / Wilmington) protein is Flavin-dependent thymidylate synthase.